Here is a 72-residue protein sequence, read N- to C-terminus: KRAIQSEKRRQHNASRRSMTRTYLKKVIAAIASGDKAAAVAAFATAQPIMDRMATKGLIHKNKAARHKSRLS.

Belongs to the bacterial ribosomal protein bS20 family.

In terms of biological role, binds directly to 16S ribosomal RNA. The polypeptide is Small ribosomal subunit protein bS20 (rpsT) (Aeromonas salmonicida).